The primary structure comprises 559 residues: MLKCIAAVGTVVWMTMFLFLYSQLSNNQSGGDSIRAWRQTKEAIDKLQEQNEDLKSILEKERQERNDQHKKIMEQSHQLPPNPENPSLPKPEPVKEIISKPSILGPVQQEVQKRMLDDRIREMFYLLHSQTIENSTKILLETQMISLMGLSAQLEKLEGSEEERFKQRTAITQRIFKSIEKLQNPKACSEAKTLVCNLDKECGFGCQLHHVTYCAITAFATQRMMVLKRDGSSWKYSSHGWTSVFKKLSKCSFDEAVGNTEAKPFAEPSPARVVSLGIVDSLITKPTFLPQAVPEQLLESLTSLHSHPPAFFVGTFISYLMRFNSATQEKLDKALKSIPLDKGPIVGLQIRRTDKVGTEAAFHALKEYMEWTEIWFKVEEKRQGKPLERRIFIASDDPTVVPEAKNDYPNYEVYGSTEIAKTAQLNNRYTDASLMGVITDIYILSKVNYLVCTFSSQVCRMGYELRQPSGADDGSKFHSLDDIYYFGGQQAHEVIVIEDHIAQNNKEIDLKVGDKVGIAGNHWNGYSKGTNRQTYKEGVFPSYKVVNDWRKFKFEALLD.

Residues 1–4 (MLKC) lie on the Cytoplasmic side of the membrane. Residues 5–24 (IAAVGTVVWMTMFLFLYSQL) form a helical; Signal-anchor for type II membrane protein membrane-spanning segment. The Lumenal segment spans residues 25 to 559 (SNNQSGGDSI…RKFKFEALLD (535 aa)). A glycan (N-linked (GlcNAc...) asparagine) is linked at Asn-27. Over residues 63–74 (QERNDQHKKIME) the composition is skewed to basic and acidic residues. A disordered region spans residues 63-90 (QERNDQHKKIMEQSHQLPPNPENPSLPK). Residues 80 to 90 (PPNPENPSLPK) show a composition bias toward pro residues. A glycan (N-linked (GlcNAc...) asparagine) is linked at Asn-134. Disulfide bonds link Cys-188/Cys-251, Cys-196/Cys-214, and Cys-202/Cys-206. The region spanning 190–480 (EAKTLVCNLD…ADDGSKFHSL (291 aa)) is the GT23 domain. Positions 351-352 (RR) are important for donor substrate binding. A disulfide bridge connects residues Cys-452 and Cys-459. In terms of domain architecture, SH3 spans 489–550 (QQAHEVIVIE…PSYKVVNDWR (62 aa)).

Belongs to the glycosyltransferase 23 family. It depends on Mn(2+) as a cofactor. Mg(2+) is required as a cofactor.

Its subcellular location is the golgi apparatus. The protein localises to the golgi stack membrane. The enzyme catalyses N(4)-{beta-D-GlcNAc-(1-&gt;2)-alpha-D-Man-(1-&gt;3)-[beta-D-GlcNAc-(1-&gt;2)-alpha-D-Man-(1-&gt;6)]-beta-D-Man-(1-&gt;4)-beta-D-GlcNAc-(1-&gt;4)-beta-D-GlcNAc}-L-asparaginyl-[protein] + GDP-beta-L-fucose = an N(4)-{beta-D-GlcNAc-(1-&gt;2)-alpha-D-Man-(1-&gt;3)-[beta-D-GlcNAc-(1-&gt;2)-alpha-D-Man-(1-&gt;6)]-beta-D-Man-(1-&gt;4)-beta-D-GlcNAc-(1-&gt;4)-[alpha-L-Fuc-(1-&gt;6)]-beta-D-GlcNAc}-L-asparaginyl-[protein] + GDP + H(+). It participates in protein modification; protein glycosylation. Inhibited by Fe(3+), Ni(2+) and Cu(2+). Catalyzes the addition of fucose in alpha 1-6 linkage to the first GlcNAc residue, next to the peptide chains in N-glycans. The addition is prevented if the GlcNAc residue is already fucosylated. Involved in susceptibility to the nematotoxic C.cinerea galectin Cgl2, likely by contributing to the synthesis of core alpha-1,6-fucosylated N-glycans to which Cgl2 binds. The polypeptide is Alpha-(1,6)-fucosyltransferase (Caenorhabditis elegans).